The sequence spans 657 residues: Glycogen debranching enzyme (657 aa).

The active-site Nucleophile is the Asp336. The active-site Proton donor is the Glu371. Positions 460–479 (ANGEENRDGTNNNYSNNHGK) are disordered.

It belongs to the glycosyl hydrolase 13 family.

The enzyme catalyses Hydrolysis of (1-&gt;6)-alpha-D-glucosidic linkages to branches with degrees of polymerization of three or four glucose residues in limit dextrin.. The protein operates within glycan degradation; glycogen degradation. In terms of biological role, removes maltotriose and maltotetraose chains that are attached by 1,6-alpha-linkage to the limit dextrin main chain, generating a debranched limit dextrin. The protein is Glycogen debranching enzyme of Escherichia coli O1:K1 / APEC.